We begin with the raw amino-acid sequence, 498 residues long: ATP synthase subunit beta, chloroplastic (498 aa).

172 to 179 (GGAGVGKT) contacts ATP.

This sequence belongs to the ATPase alpha/beta chains family. As to quaternary structure, F-type ATPases have 2 components, CF(1) - the catalytic core - and CF(0) - the membrane proton channel. CF(1) has five subunits: alpha(3), beta(3), gamma(1), delta(1), epsilon(1). CF(0) has four main subunits: a(1), b(1), b'(1) and c(9-12).

It localises to the plastid. The protein resides in the chloroplast thylakoid membrane. It catalyses the reaction ATP + H2O + 4 H(+)(in) = ADP + phosphate + 5 H(+)(out). In terms of biological role, produces ATP from ADP in the presence of a proton gradient across the membrane. The catalytic sites are hosted primarily by the beta subunits. This Nypa fruticans (Nypa palm) protein is ATP synthase subunit beta, chloroplastic.